Reading from the N-terminus, the 282-residue chain is MAGAGLIGIRRRIKSVTNIRKITKAMGLVSTAKLRKARLNLEINKKYYNEYKVILKDIINFIEDSNIYIDGNGSHKKLYVIFTSDSGLCGSFNINIINNVINEIKEDKENSLVIVIGQKGRMYLKKLGINTLAEYIEIPDVPTTKEARTIAKNIIKLYSSKEVGEVFLVYSEFYSPVKQQVLINKILPFTKENKSDNKYIEFNPPVTRFVDEILENYLKATILNCFSNSKASENGSRMTAMNGATDNANDLLDNLDLQFNRLRQSAITQEISEIVGGAEAQR.

It belongs to the ATPase gamma chain family. As to quaternary structure, F-type ATPases have 2 components, CF(1) - the catalytic core - and CF(0) - the membrane proton channel. CF(1) has five subunits: alpha(3), beta(3), gamma(1), delta(1), epsilon(1). CF(0) has three main subunits: a, b and c.

Its subcellular location is the cell membrane. Its function is as follows. Produces ATP from ADP in the presence of a proton gradient across the membrane. The gamma chain is believed to be important in regulating ATPase activity and the flow of protons through the CF(0) complex. This chain is ATP synthase gamma chain, found in Clostridium botulinum (strain Loch Maree / Type A3).